A 305-amino-acid polypeptide reads, in one-letter code: MQNIPKNMFEPAAANAGDAEKISKKSLSLWKDAMLRFRSNKLAMVGLIIIVLIILMAIFAPMFSRYDYSTTNLLNADKPPSKDHWFGTDDLGRDIFVRTWVGARISIFIGVAAAVLDLLIGVIWGSISGFRGGRTDEIMMRIADILWAVPSLLMVILLMVVLPKGLFTIIIAMTITGWINMARIVRGQVLQLKNQEYVLASQTLGAKTSRLLFKHIVPNAMGSILVTMTLTVPTAIFTEAFLSYLGLGVPAPLASWGTMASDGLPALTYYPWRLFFPAGFICITMFGFNVVGDGLRDALDPKLRK.

Helical transmembrane passes span 43-63 (AMVGLIIIVLIILMAIFAPMF), 105-125 (ISIFIGVAAAVLDLLIGVIWG), 166-185 (LFTIIIAMTITGWINMARIV), 212-232 (LFKHIVPNAMGSILVTMTLTV), 236-256 (IFTEAFLSYLGLGVPAPLASW), and 274-294 (LFFPAGFICITMFGFNVVGDG). The region spanning 103-292 (ARISIFIGVA…ITMFGFNVVG (190 aa)) is the ABC transmembrane type-1 domain.

The protein belongs to the binding-protein-dependent transport system permease family. OppBC subfamily. In terms of assembly, the complex is composed of two ATP-binding proteins (OppD and OppF), two transmembrane proteins (OppB and OppC) and a solute-binding protein (OppA).

Its subcellular location is the cell membrane. Functionally, part of the ABC transporter complex OppABCDF involved in the uptake of oligopeptides. Probably responsible for the translocation of the substrate across the membrane. Required for sporulation and genetic competence. This chain is Oligopeptide transport system permease protein OppC, found in Bacillus subtilis (strain 168).